Consider the following 594-residue polypeptide: Jacalin-related lectin 44 (594 aa).

Residues 1–23 (MIQKLGAKGIKSDERNQREWDDG) are disordered. 4 Jacalin-type lectin domains span residues 2 to 148 (IQKL…YFIS), 151 to 293 (PTRL…YFST), 296 to 441 (PNKL…YYRP), and 448 to 588 (VKRL…HVIP). The segment covering 10–23 (IKSDERNQREWDDG) has biased composition (basic and acidic residues).

This sequence belongs to the jacalin lectin family.

This chain is Jacalin-related lectin 44 (JAL44), found in Arabidopsis thaliana (Mouse-ear cress).